Here is a 154-residue protein sequence, read N- to C-terminus: Xanthine-guanine phosphoribosyltransferase (154 aa).

Residues 37-38 (RG), Arg69, and 88-96 (EDLVDSGDT) contribute to the 5-phospho-alpha-D-ribose 1-diphosphate site. Residue Arg69 coordinates GMP. Asp89 contributes to the Mg(2+) binding site. Asp92 and Ile135 together coordinate guanine. Asp92 and Ile135 together coordinate xanthine. GMP is bound by residues 92–96 (DSGDT) and 134–135 (WI).

This sequence belongs to the purine/pyrimidine phosphoribosyltransferase family. XGPT subfamily. Homotetramer. Mg(2+) serves as cofactor.

The protein resides in the cell inner membrane. The enzyme catalyses GMP + diphosphate = guanine + 5-phospho-alpha-D-ribose 1-diphosphate. It catalyses the reaction XMP + diphosphate = xanthine + 5-phospho-alpha-D-ribose 1-diphosphate. The catalysed reaction is IMP + diphosphate = hypoxanthine + 5-phospho-alpha-D-ribose 1-diphosphate. It functions in the pathway purine metabolism; GMP biosynthesis via salvage pathway; GMP from guanine: step 1/1. It participates in purine metabolism; XMP biosynthesis via salvage pathway; XMP from xanthine: step 1/1. In terms of biological role, purine salvage pathway enzyme that catalyzes the transfer of the ribosyl-5-phosphate group from 5-phospho-alpha-D-ribose 1-diphosphate (PRPP) to the N9 position of the 6-oxopurines guanine and xanthine to form the corresponding ribonucleotides GMP (guanosine 5'-monophosphate) and XMP (xanthosine 5'-monophosphate), with the release of PPi. To a lesser extent, also acts on hypoxanthine. The chain is Xanthine-guanine phosphoribosyltransferase from Vibrio parahaemolyticus serotype O3:K6 (strain RIMD 2210633).